We begin with the raw amino-acid sequence, 131 residues long: D-ribose pyranase (131 aa).

Residue histidine 20 is the Proton donor of the active site. Substrate is bound by residues aspartate 28, histidine 98, and 120 to 122 (YAN).

It belongs to the RbsD / FucU family. RbsD subfamily. As to quaternary structure, homodecamer.

The protein resides in the cytoplasm. The catalysed reaction is beta-D-ribopyranose = beta-D-ribofuranose. It participates in carbohydrate metabolism; D-ribose degradation; D-ribose 5-phosphate from beta-D-ribopyranose: step 1/2. In terms of biological role, catalyzes the interconversion of beta-pyran and beta-furan forms of D-ribose. In Clostridium novyi (strain NT), this protein is D-ribose pyranase.